Here is a 359-residue protein sequence, read N- to C-terminus: uncharacterized protein (359 aa).

The segment covering 73–88 (AATAGTTPATGASGSA) has biased composition (low complexity). The interval 73–93 (AATAGTTPATGASGSARPTDA) is disordered. The 176-residue stretch at 179–354 (PSTCRGDNVS…AFSAAIQAGE (176 aa)) folds into the Macro domain.

This is an uncharacterized protein from Mycobacterium tuberculosis (strain ATCC 25618 / H37Rv).